The chain runs to 452 residues: Pup--protein ligase (452 aa).

Glutamate 9 serves as a coordination point for Mg(2+). Arginine 53 is a binding site for ATP. Position 55 (tyrosine 55) interacts with Mg(2+). Residue aspartate 57 is the Proton acceptor of the active site. Mg(2+) is bound at residue glutamate 63. 2 residues coordinate ATP: threonine 66 and tryptophan 419.

The protein belongs to the Pup ligase/Pup deamidase family. Pup-conjugating enzyme subfamily.

It carries out the reaction ATP + [prokaryotic ubiquitin-like protein]-L-glutamate + [protein]-L-lysine = ADP + phosphate + N(6)-([prokaryotic ubiquitin-like protein]-gamma-L-glutamyl)-[protein]-L-lysine.. The protein operates within protein degradation; proteasomal Pup-dependent pathway. It participates in protein modification; protein pupylation. Its function is as follows. Catalyzes the covalent attachment of the prokaryotic ubiquitin-like protein modifier Pup to the proteasomal substrate proteins, thereby targeting them for proteasomal degradation. This tagging system is termed pupylation. The ligation reaction involves the side-chain carboxylate of the C-terminal glutamate of Pup and the side-chain amino group of a substrate lysine. The protein is Pup--protein ligase of Nocardia farcinica (strain IFM 10152).